Here is a 536-residue protein sequence, read N- to C-terminus: CTP synthase (536 aa).

The segment at 1–267 is amidoligase domain; sequence MTKFIFVTGG…DDIVIKRLQL (267 aa). S13 is a binding site for CTP. Position 13 (S13) interacts with UTP. Residue 14–19 coordinates ATP; the sequence is SLGKGI. Y54 contributes to the L-glutamine binding site. D71 is an ATP binding site. Mg(2+)-binding residues include D71 and E141. Residues 148 to 150, 188 to 193, and K224 each bind CTP; these read DIE and KTKPTQ. UTP is bound by residues 188-193 and K224; that span reads KTKPTQ. Position 240–242 (240–242) interacts with ATP; sequence RDA. One can recognise a Glutamine amidotransferase type-1 domain in the interval 293–535; the sequence is TIGLVGKYVS…IEASLKYQQN (243 aa). Residue G355 participates in L-glutamine binding. The active-site Nucleophile; for glutamine hydrolysis is C382. L-glutamine-binding positions include 383–386, E406, and R463; that span reads LGMQ. Active-site residues include H508 and E510.

The protein belongs to the CTP synthase family. As to quaternary structure, homotetramer.

It carries out the reaction UTP + L-glutamine + ATP + H2O = CTP + L-glutamate + ADP + phosphate + 2 H(+). It catalyses the reaction L-glutamine + H2O = L-glutamate + NH4(+). The enzyme catalyses UTP + NH4(+) + ATP = CTP + ADP + phosphate + 2 H(+). It participates in pyrimidine metabolism; CTP biosynthesis via de novo pathway; CTP from UDP: step 2/2. With respect to regulation, allosterically activated by GTP, when glutamine is the substrate; GTP has no effect on the reaction when ammonia is the substrate. The allosteric effector GTP functions by stabilizing the protein conformation that binds the tetrahedral intermediate(s) formed during glutamine hydrolysis. Inhibited by the product CTP, via allosteric rather than competitive inhibition. Catalyzes the ATP-dependent amination of UTP to CTP with either L-glutamine or ammonia as the source of nitrogen. Regulates intracellular CTP levels through interactions with the four ribonucleotide triphosphates. The polypeptide is CTP synthase (Staphylococcus aureus (strain COL)).